The primary structure comprises 364 residues: Guanine nucleotide-binding protein alpha-8 subunit (364 aa).

G2 carries the N-myristoyl glycine lipid modification. C5 is lipidated: S-palmitoyl cysteine. In terms of domain architecture, G-alpha spans 38–364; the sequence is KILKLLILGP…QHTMQKVGIQ (327 aa). The G1 motif stretch occupies residues 41–54; that stretch reads KLLILGPGESGKST. Residues 46–53, 186–192, 211–215, 280–283, and A336 each bind GTP; these read GPGESGKS, LKSRVPT, DVGGQ, and NKID. Positions 53 and 192 each coordinate Mg(2+). Positions 184-192 are G2 motif; that stretch reads DILKSRVPT. The G3 motif stretch occupies residues 207–216; that stretch reads FKIFDVGGQR. Residues 276–283 form a G4 motif region; the sequence is ILFLNKID. The interval 334 to 339 is G5 motif; the sequence is TCATDT.

The protein belongs to the G-alpha family. As to quaternary structure, g proteins are composed of 3 units; alpha, beta and gamma. The alpha chain contains the guanine nucleotide binding site.

Its function is as follows. Guanine nucleotide-binding proteins (G proteins) are involved as modulators or transducers in various transmembrane signaling systems. This chain is Guanine nucleotide-binding protein alpha-8 subunit (gpa-8), found in Caenorhabditis briggsae.